The following is a 303-amino-acid chain: Ribonuclease P protein subunit p40 (303 aa).

Component of nuclear RNase P and RNase MRP ribonucleoproteins. RNase P consists of a catalytic RNA moiety and about 10 protein subunits; POP1, POP4, POP5, POP7, RPP14, RPP21, RPP25, RPP30, RPP38 and RPP40. Within the RNase P complex, POP1, POP7 and RPP25 form the 'finger' subcomplex, POP5, RPP14, RPP40 and homodimeric RPP30 form the 'palm' subcomplex, and RPP21, POP4 and RPP38 form the 'wrist' subcomplex. All subunits of the RNase P complex interact with the catalytic RNA. Several subunits of RNase P are also part of the RNase MRP complex. RNase MRP consists of a catalytic RNA moiety and about 8 protein subunits; POP1, POP7, RPP25, RPP30, RPP38, RPP40 and possibly also POP4 and POP5.

The protein localises to the nucleus. It is found in the nucleolus. In terms of biological role, component of ribonuclease P, a ribonucleoprotein complex that generates mature tRNA molecules by cleaving their 5'-ends. Also a component of the MRP ribonuclease complex, which cleaves pre-rRNA sequences. This chain is Ribonuclease P protein subunit p40 (RPP40), found in Bos taurus (Bovine).